The following is a 264-amino-acid chain: Thymidylate synthase (264 aa).

Arg-21 contacts dUMP. His-51 contributes to the (6R)-5,10-methylene-5,6,7,8-tetrahydrofolate binding site. 126-127 (RR) contacts dUMP. The active-site Nucleophile is the Cys-146. DUMP contacts are provided by residues 166–169 (RSCD), Asn-177, and 207–209 (HLY). (6R)-5,10-methylene-5,6,7,8-tetrahydrofolate is bound at residue Asp-169. Ala-263 is a (6R)-5,10-methylene-5,6,7,8-tetrahydrofolate binding site.

This sequence belongs to the thymidylate synthase family. Bacterial-type ThyA subfamily. Homodimer.

It is found in the cytoplasm. It catalyses the reaction dUMP + (6R)-5,10-methylene-5,6,7,8-tetrahydrofolate = 7,8-dihydrofolate + dTMP. The protein operates within pyrimidine metabolism; dTTP biosynthesis. Catalyzes the reductive methylation of 2'-deoxyuridine-5'-monophosphate (dUMP) to 2'-deoxythymidine-5'-monophosphate (dTMP) while utilizing 5,10-methylenetetrahydrofolate (mTHF) as the methyl donor and reductant in the reaction, yielding dihydrofolate (DHF) as a by-product. This enzymatic reaction provides an intracellular de novo source of dTMP, an essential precursor for DNA biosynthesis. The protein is Thymidylate synthase of Shewanella amazonensis (strain ATCC BAA-1098 / SB2B).